We begin with the raw amino-acid sequence, 1140 residues long: Kinesin-like protein KIN-14O (1140 aa).

A compositionally biased stretch (basic and acidic residues) spans 1 to 12 (MLESEFQREHAF). 4 disordered regions span residues 1 to 37 (MLES…ADDD), 50 to 81 (NPAE…DEDS), 161 to 217 (SPGS…GGHK), and 323 to 347 (ASGT…KEED). Over residues 161 to 179 (SPGSSHGGSTPRSPFSPSS) the composition is skewed to low complexity. Basic and acidic residues predominate over residues 180 to 193 (PRERHNKGLADSRF). Residues 197-209 (LPNSSALDPSSPG) are compositionally biased toward polar residues. Residues 327-546 (SEENETEKSK…KAKEMEEKSE (220 aa)) are a coiled coil. The span at 332-347 (TEKSKLEEKKKDKEED) shows a compositional bias: basic and acidic residues. Positions 632-952 (NIRVYCRVRP…LKFAERVSGV (321 aa)) constitute a Kinesin motor domain. 716–723 (GQTGSGKT) lines the ATP pocket. A compositionally biased stretch (polar residues) spans 1002-1018 (LGQSDDFNSEAGDSQLS). Disordered regions lie at residues 1002–1021 (LGQS…SIED) and 1028–1140 (DYTR…KRWS). Over residues 1066–1078 (EGRKPLKISDKPK) the composition is skewed to basic and acidic residues. Residues 1099–1130 (TMRTTNIAKATSALLSPSSQGMKKTGSASNFL) show a composition bias toward polar residues.

It belongs to the TRAFAC class myosin-kinesin ATPase superfamily. Kinesin family. KIN-14 subfamily.

In Arabidopsis thaliana (Mouse-ear cress), this protein is Kinesin-like protein KIN-14O.